A 1457-amino-acid chain; its full sequence is ABC transporter G family member 36 (1457 aa).

The tract at residues 14-43 (RLGGSMRGDSGSMWRRGDDVFSRSSREEDD) is disordered. Residues 28-39 (RRGDDVFSRSSR) show a composition bias toward basic and acidic residues. The ABC transporter 1 domain maps to 164 to 437 (GNALGILPNR…FESTGFKCPD (274 aa)). ATP is bound at residue 197–204 (GPPGSGKT). In terms of domain architecture, ABC transmembrane type-2 1 spans 515-728 (ELLKANIDRE…AQNAISVNEL (214 aa)). Helical transmembrane passes span 533-553 (FVYM…MTLF), 565-585 (SGGI…FNGF), 621-641 (IPIT…VIGF), 653-673 (LLML…GGAA), 677-697 (IVAN…GGFI), 706-726 (WWIW…ISVN), and 765-785 (IGFG…TLAL). A disordered region spans residues 821–841 (SSGSTRRPMGNGTENDSTIVD). Positions 860 to 1112 (LSFDNVRYSV…ELIKYFESIP (253 aa)) constitute an ABC transporter 2 domain. 905-912 (GVSGAGKT) is an ATP binding site. The region spanning 1185–1399 (TQCMACLWKQ…TLYGLVVSQF (215 aa)) is the ABC transmembrane type-2 2 domain. A run of 7 helical transmembrane segments spans residues 1209–1229 (FFFT…LGGK), 1244–1264 (YAAV…VVAV), 1292–1312 (IPYT…MIGF), 1319–1339 (FFWY…YGMM), 1349–1369 (IASI…GFVI), 1380–1400 (WYCW…SQFG), and 1429–1449 (WVAT…GFAI).

It belongs to the ABC transporter superfamily. ABCG family. PDR (TC 3.A.1.205) subfamily.

It is found in the membrane. Functionally, may be a general defense protein. This is ABC transporter G family member 36 from Oryza sativa subsp. indica (Rice).